A 164-amino-acid polypeptide reads, in one-letter code: Protein SprT (164 aa).

Residues Q14–V156 enclose the SprT-like domain. H69 contacts Zn(2+). The active site involves E70. H73 serves as a coordination point for Zn(2+).

The protein belongs to the SprT family. Zn(2+) is required as a cofactor.

It localises to the cytoplasm. This chain is Protein SprT, found in Pseudomonas fluorescens (strain ATCC BAA-477 / NRRL B-23932 / Pf-5).